Here is a 240-residue protein sequence, read N- to C-terminus: 1-(5-phosphoribosyl)-5-[(5-phosphoribosylamino)methylideneamino] imidazole-4-carboxamide isomerase (240 aa).

Asp8 acts as the Proton acceptor in catalysis. Catalysis depends on Asp130, which acts as the Proton donor.

This sequence belongs to the HisA/HisF family.

It localises to the cytoplasm. It catalyses the reaction 1-(5-phospho-beta-D-ribosyl)-5-[(5-phospho-beta-D-ribosylamino)methylideneamino]imidazole-4-carboxamide = 5-[(5-phospho-1-deoxy-D-ribulos-1-ylimino)methylamino]-1-(5-phospho-beta-D-ribosyl)imidazole-4-carboxamide. It functions in the pathway amino-acid biosynthesis; L-histidine biosynthesis; L-histidine from 5-phospho-alpha-D-ribose 1-diphosphate: step 4/9. In Flavobacterium johnsoniae (strain ATCC 17061 / DSM 2064 / JCM 8514 / BCRC 14874 / CCUG 350202 / NBRC 14942 / NCIMB 11054 / UW101) (Cytophaga johnsonae), this protein is 1-(5-phosphoribosyl)-5-[(5-phosphoribosylamino)methylideneamino] imidazole-4-carboxamide isomerase.